We begin with the raw amino-acid sequence, 351 residues long: Methylthioribose-1-phosphate isomerase (351 aa).

Substrate is bound by residues 51 to 53 (RGA), Arg-94, and Gln-199. Asp-240 serves as the catalytic Proton donor. 250–251 (NK) contacts substrate.

The protein belongs to the EIF-2B alpha/beta/delta subunits family. MtnA subfamily. As to quaternary structure, homodimer.

It carries out the reaction 5-(methylsulfanyl)-alpha-D-ribose 1-phosphate = 5-(methylsulfanyl)-D-ribulose 1-phosphate. It participates in amino-acid biosynthesis; L-methionine biosynthesis via salvage pathway; L-methionine from S-methyl-5-thio-alpha-D-ribose 1-phosphate: step 1/6. Its function is as follows. Catalyzes the interconversion of methylthioribose-1-phosphate (MTR-1-P) into methylthioribulose-1-phosphate (MTRu-1-P). The polypeptide is Methylthioribose-1-phosphate isomerase (Bacillus anthracis).